The primary structure comprises 721 residues: MSSKRKVELCDSLLTWMQTFQVSGPCSSYEDLTGGVAIAQVLNRIDPSWFNEAWLVRVKKDTTENWRLKVSNLKRILQSVLEYYQDVLGHPVSDDHIPDVALIGEFSNDTELRKMVQLVLGCAISCDKKEEHIQQIMTLGESVQQAVMESIQELLSKAPSDAVTSESFINYDSQSRKYYFLSEDNDEKNEILQRCHDLEQQVSLLMEEKKNMMGENRTLKEQQEQSGMGTPQLFNKKLLLLQSQIEQLQEENYRLESSRDDYRQRCQELDRDVQELQQRNQDLTGLAHESQALRDEMDVLRHSSDRVGKLESLVDSYKKKLEDLGDLRRQVKLLEERNTMYMQRTFQLEEDLHKANASRGQVESLSRQVQELHKKHSTESLRAEKWQFEFQTLKEKFEALQKERERLIAERDSLRETNDELRCSHLQQTCLGQADLLLSGSSPPLENLAAEIVPAELRETVIRLQQENKMLCAQEASYHERLCDLQNFLEESNRSKNRLESESRLQQQQIKGLKAQVEELQKQLREQGNRAEDSSQLKRKLEEHLEMLHDAHSELQKKREYIETLEPKADLNMSRKVDELQQILHQKEEDMRAMEERYKRYVDKARTVIKSLDPKQQNYIPPEIQALKNQLQEKDTRIRHLETDYEKTKVQRDQEEKLIISAWYNMGMALHQKSTDEKTQPPNGAQSFLAQQRLATNARRGQISRSHTLLPRYTDKRQSLS.

In terms of domain architecture, Calponin-homology (CH) spans 7 to 123; sequence VELCDSLLTW…KMVQLVLGCA (117 aa). Coiled coils occupy residues 181-425 and 484-659; these read LSED…RCSH and DLQN…EKLI. The tract at residues 696-721 is disordered; sequence TNARRGQISRSHTLLPRYTDKRQSLS.

The protein belongs to the hook family. Interacts with microtubules.

It localises to the cytoplasm. The protein resides in the cytoskeleton. The protein localises to the microtubule organizing center. Its subcellular location is the centrosome. Functionally, may function to promote vesicle trafficking and/or fusion. May contribute to the establishment and maintenance of centrosome function. The protein is Protein Hook homolog 2 (hook2) of Xenopus laevis (African clawed frog).